Here is a 120-residue protein sequence, read N- to C-terminus: Ribosome-binding factor A (120 aa).

Belongs to the RbfA family. Monomer. Binds 30S ribosomal subunits, but not 50S ribosomal subunits or 70S ribosomes.

It localises to the cytoplasm. Its function is as follows. One of several proteins that assist in the late maturation steps of the functional core of the 30S ribosomal subunit. Associates with free 30S ribosomal subunits (but not with 30S subunits that are part of 70S ribosomes or polysomes). Required for efficient processing of 16S rRNA. May interact with the 5'-terminal helix region of 16S rRNA. This Chlorobaculum parvum (strain DSM 263 / NCIMB 8327) (Chlorobium vibrioforme subsp. thiosulfatophilum) protein is Ribosome-binding factor A.